The primary structure comprises 233 residues: Large ribosomal subunit protein uL1 (233 aa).

Belongs to the universal ribosomal protein uL1 family. In terms of assembly, part of the 50S ribosomal subunit.

Functionally, binds directly to 23S rRNA. The L1 stalk is quite mobile in the ribosome, and is involved in E site tRNA release. In terms of biological role, protein L1 is also a translational repressor protein, it controls the translation of the L11 operon by binding to its mRNA. The protein is Large ribosomal subunit protein uL1 of Brucella canis (strain ATCC 23365 / NCTC 10854 / RM-666).